We begin with the raw amino-acid sequence, 278 residues long: Putative phosphoenolpyruvate synthase regulatory protein (278 aa).

An ADP-binding site is contributed by 158–165; sequence GVSRSGKT.

Belongs to the pyruvate, phosphate/water dikinase regulatory protein family. PSRP subfamily.

The catalysed reaction is [pyruvate, water dikinase] + ADP = [pyruvate, water dikinase]-phosphate + AMP + H(+). It catalyses the reaction [pyruvate, water dikinase]-phosphate + phosphate + H(+) = [pyruvate, water dikinase] + diphosphate. In terms of biological role, bifunctional serine/threonine kinase and phosphorylase involved in the regulation of the phosphoenolpyruvate synthase (PEPS) by catalyzing its phosphorylation/dephosphorylation. The sequence is that of Putative phosphoenolpyruvate synthase regulatory protein from Acinetobacter baylyi (strain ATCC 33305 / BD413 / ADP1).